The primary structure comprises 394 residues: LL-diaminopimelate aminotransferase (394 aa).

Substrate contacts are provided by Tyr-14 and Gly-41. Residues Tyr-71, 104 to 105, Tyr-128, Asn-174, Tyr-205, and 233 to 235 each bind pyridoxal 5'-phosphate; these read AK and SFS. Substrate contacts are provided by Lys-105, Tyr-128, and Asn-174. Lys-236 carries the N6-(pyridoxal phosphate)lysine modification. Pyridoxal 5'-phosphate-binding residues include Arg-244 and Asn-275. Residues Asn-275 and Arg-369 each contribute to the substrate site.

It belongs to the class-I pyridoxal-phosphate-dependent aminotransferase family. LL-diaminopimelate aminotransferase subfamily. Homodimer. It depends on pyridoxal 5'-phosphate as a cofactor.

The catalysed reaction is (2S,6S)-2,6-diaminopimelate + 2-oxoglutarate = (S)-2,3,4,5-tetrahydrodipicolinate + L-glutamate + H2O + H(+). Its pathway is amino-acid biosynthesis; L-lysine biosynthesis via DAP pathway; LL-2,6-diaminopimelate from (S)-tetrahydrodipicolinate (aminotransferase route): step 1/1. Its function is as follows. Involved in the synthesis of meso-diaminopimelate (m-DAP or DL-DAP), required for both lysine and peptidoglycan biosynthesis. Catalyzes the direct conversion of tetrahydrodipicolinate to LL-diaminopimelate. Is also able to use meso-diaminopimelate, cystathionine, lysine or ornithine as substrates. This is LL-diaminopimelate aminotransferase from Chlamydia trachomatis serovar D (strain ATCC VR-885 / DSM 19411 / UW-3/Cx).